We begin with the raw amino-acid sequence, 217 residues long: Nascent polypeptide-associated complex subunit alpha (217 aa).

Positions 1–45 are disordered; that stretch reads MPELTEIKSEAAPSTSAEAKPEDVRVEDDGSDSDSDGGMPGLEEA. Residues 19–28 show a composition bias toward basic and acidic residues; the sequence is AKPEDVRVED. Positions 70–135 constitute an NAC-A/B domain; that stretch reads SRGEKKARKI…AKIEDLSQQA (66 aa). The segment at 154-177 is disordered; the sequence is SVGATTSVAPIAEEDEEDVDDTGV. Residues 165–176 show a composition bias toward acidic residues; sequence AEEDEEDVDDTG. Residues 177 to 217 form the UBA domain; sequence VDEKDIELVITQANTTRAKAIKALKNNNNDIVNAIMELTML.

This sequence belongs to the NAC-alpha family. In terms of assembly, part of the nascent polypeptide-associated complex (NAC), consisting of Nac-alpha and bicaudal (bic).

Its function is as follows. May promote appropriate targeting of ribosome-nascent polypeptide complexes. Required for correct localization of the osk/oskar protein to the posterior pole during embryonic development. The osk protein directs the recruitment of molecules responsible for posterior body patterning and germline formation in the embryo. The protein is Nascent polypeptide-associated complex subunit alpha (Nacalpha) of Drosophila melanogaster (Fruit fly).